Consider the following 537-residue polypeptide: Cytoplasmic 60S subunit biogenesis factor REI1 homolog (537 aa).

2 consecutive C2H2-type zinc fingers follow at residues 18–42 (YTCNTCQVAFRNSELQRGHMRSDWH) and 83–107 (KTCEVCQKTYYSENSFRNHLSSTKH). Disordered stretches follow at residues 101–151 (HLSS…AEEE) and 163–204 (SIHD…PEAL). Residues 192-204 (EETPTTTPKPEAL) show a composition bias toward low complexity. The segment at 260-284 (NECLTCGKMKVNVFAIQTHMRDKSH) adopts a C2H2-type 3 zinc-finger fold. Acidic residues predominate over residues 312–322 (DWETEEEDKGE). 2 disordered regions span residues 312-361 (DWET…ASSL) and 382-401 (GKHPHHSRENKKAHREADGI). A compositionally biased stretch (basic and acidic residues) spans 323–339 (EDGGVRLGAKRESKVVD). Residues 340–356 (ENGDEVMEDEEGWETDS) are compositionally biased toward acidic residues. Residues 383–395 (KHPHHSRENKKAH) are compositionally biased toward basic residues.

It belongs to the REI1 family. In terms of assembly, associates with nascent pre-60S particles that have not yet entered the translating pool, and is released from mature 60S subunits.

It is found in the cytoplasm. Pre-60S-associated factor involved in the cytoplasmic maturation of the 60S subunit. Involved in the dissociation and recycling of other late pre-60S factors before newly synthesized large ribosomal subunits enter translation. This is Cytoplasmic 60S subunit biogenesis factor REI1 homolog from Chaetomium thermophilum (strain DSM 1495 / CBS 144.50 / IMI 039719) (Thermochaetoides thermophila).